The sequence spans 956 residues: uncharacterized protein (956 aa).

Residues 40–141 enclose the Fibronectin type-III domain; the sequence is PATKVSIDKI…IYCMTKAREA (102 aa). Disordered regions lie at residues 152 to 173 and 488 to 600; these read RNTITSSTAMQPRNSKSEPAPL and NNGD…SYSH. Polar residues-rich tracts occupy residues 153–165 and 488–523; these read NTITSSTAMQPRN and NNGDSLAATNSNNSAEKNRSSGSIQLPLSNNMSRTG. Threonine 154 is modified (phosphothreonine). 2 positions are modified to phosphoserine: serine 501 and serine 520. Residues 524–543 are compositionally biased toward low complexity; it reads SIDLISNNNKSINNSNADSA. Residues 552 to 563 are compositionally biased toward polar residues; it reads VSYSPSNEPIQP. Residues 564-574 are compositionally biased toward low complexity; the sequence is SSSLLSQLTQD. Residues 578–599 show a composition bias toward polar residues; the sequence is RSMLSNHISSNNENKQQPSSYS. Phosphoserine is present on residues serine 802, serine 842, and serine 895. The tract at residues 875-956 is disordered; sequence VGPKVPAKEP…NLFNPHSHDS (82 aa). Over residues 895 to 904 the composition is skewed to low complexity; it reads SNSSISSAWS.

This is an uncharacterized protein from Saccharomyces cerevisiae (strain ATCC 204508 / S288c) (Baker's yeast).